Consider the following 76-residue polypeptide: Large ribosomal subunit protein uL29 (76 aa).

This sequence belongs to the universal ribosomal protein uL29 family.

In Corynebacterium glutamicum (strain R), this protein is Large ribosomal subunit protein uL29.